The following is a 119-amino-acid chain: FAD-linked sulfhydryl oxidase (119 aa).

Residues 1 to 97 (MLHWGPKFWR…ISWSEYKNIY (97 aa)) enclose the ERV/ALR sulfhydryl oxidase domain. Cysteines 44 and 47 form a disulfide.

It belongs to the asfivirus B119L family. As to quaternary structure, interacts with A151R. Requires FAD as cofactor.

Its subcellular location is the host cytoplasm. The protein localises to the virion. It carries out the reaction 2 R'C(R)SH + O2 = R'C(R)S-S(R)CR' + H2O2. In terms of biological role, FAD-dependent sulfhydryl oxidase that catalyzes the formation of disulfide bonds in viral proteins produced in the cell cytoplasm. Involved in virion maturation. The polypeptide is FAD-linked sulfhydryl oxidase (Ornithodoros (relapsing fever ticks)).